Consider the following 282-residue polypeptide: Virginiamycin B lyase (282 aa).

Residue H217 coordinates substrate. E256 provides a ligand contact to Mg(2+). H258 (proton acceptor) is an active-site residue. E273 provides a ligand contact to Mg(2+).

It belongs to the Vgb family. In terms of assembly, monomer. Mg(2+) serves as cofactor.

Its function is as follows. Inactivates the type B streptogramin antibiotics by linearizing the lactone ring at the ester linkage, generating a free phenylglycine carboxylate and converting the threonyl moiety into 2-amino-butenoic acid. The sequence is that of Virginiamycin B lyase from Mycolicibacterium smegmatis (strain ATCC 700084 / mc(2)155) (Mycobacterium smegmatis).